The chain runs to 563 residues: E3 ubiquitin-protein ligase IpaH2.5 (563 aa).

Residues 1 to 270 (MIKSTNIQVI…PDYSGPQIFF (270 aa)) are interaction with target proteins. 8 LRR repeats span residues 69–90 (LQNQEAELNLSELDLKTLPDLP), 91–115 (PQITTLEIRKNLLTHLPDLPPMLKV), 117–130 (HAQFNQLESLPALP), 131–150 (ETLEELNAGDNKIKELPFLP), 151–170 (ENLTHLRVHNNRLHILPLLP), 171–195 (PELKLLVVSGNRLDSIPPFPDKLEG), 197–209 (ALANNFIEQLPEL), and 210–233 (PFSMNRAVLMNNNLTTLPESVLRL). A linker region spans residues 271–281 (SMGNSATISAP). The E3 ubiquitin-protein ligase catalytic domain stretch occupies residues 282–563 (EHSLADAVTA…YRQLTDEVLA (282 aa)). The NEL domain occupies 284–563 (SLADAVTAWF…YRQLTDEVLA (280 aa)). C368 acts as the Glycyl thioester intermediate in catalysis.

It belongs to the LRR-containing bacterial E3 ligase family. In terms of assembly, interacts with human RBCK1/HOIL-1 and RNF31/HOIP components of the LUBAC complex. Post-translationally, ubiquitinated in the presence of host E1 ubiquitin-activating enzyme, E2 ubiquitin-conjugating enzyme and ubiquitin.

The protein localises to the secreted. It is found in the host cytoplasm. The catalysed reaction is S-ubiquitinyl-[E2 ubiquitin-conjugating enzyme]-L-cysteine + [acceptor protein]-L-lysine = [E2 ubiquitin-conjugating enzyme]-L-cysteine + N(6)-ubiquitinyl-[acceptor protein]-L-lysine.. It functions in the pathway protein modification; protein ubiquitination. Exists in an autoinhibited state in the absence of substrate protein, probably due to interactions of the leucine-rich repeat domain with the catalytic domain. Is activated upon binding to a substrate protein. In terms of biological role, E3 ubiquitin-protein ligase effector that inhibits host cell innate immunity during bacterial infection by catalyzing 'Lys-48'-linked polyubiquitination and subsequent degradation of host RNF31/HOIP. Host RNF31/HOIP is the catalytic component of the LUBAC complex, which conjugates linear ('Met-1'-linked) polyubiquitin chains at the surface of bacteria invading the host cytosol to form the ubiquitin coat surrounding bacteria. The bacterial ubiquitin coat acts as an 'eat-me' signal for xenophagy and promotes NF-kappa-B activation. The protein is E3 ubiquitin-protein ligase IpaH2.5 of Shigella flexneri.